A 372-amino-acid chain; its full sequence is UDP-N-acetylglucosamine--N-acetylmuramyl-(pentapeptide) pyrophosphoryl-undecaprenol N-acetylglucosamine transferase (372 aa).

UDP-N-acetyl-alpha-D-glucosamine contacts are provided by residues 10–12 (TGG), Asn-124, Arg-166, Ser-196, Ile-256, and Gln-301.

It belongs to the glycosyltransferase 28 family. MurG subfamily.

It localises to the cell membrane. It catalyses the reaction di-trans,octa-cis-undecaprenyl diphospho-N-acetyl-alpha-D-muramoyl-L-alanyl-D-glutamyl-meso-2,6-diaminopimeloyl-D-alanyl-D-alanine + UDP-N-acetyl-alpha-D-glucosamine = di-trans,octa-cis-undecaprenyl diphospho-[N-acetyl-alpha-D-glucosaminyl-(1-&gt;4)]-N-acetyl-alpha-D-muramoyl-L-alanyl-D-glutamyl-meso-2,6-diaminopimeloyl-D-alanyl-D-alanine + UDP + H(+). The protein operates within cell wall biogenesis; peptidoglycan biosynthesis. Its function is as follows. Cell wall formation. Catalyzes the transfer of a GlcNAc subunit on undecaprenyl-pyrophosphoryl-MurNAc-pentapeptide (lipid intermediate I) to form undecaprenyl-pyrophosphoryl-MurNAc-(pentapeptide)GlcNAc (lipid intermediate II). This Desulforamulus reducens (strain ATCC BAA-1160 / DSM 100696 / MI-1) (Desulfotomaculum reducens) protein is UDP-N-acetylglucosamine--N-acetylmuramyl-(pentapeptide) pyrophosphoryl-undecaprenol N-acetylglucosamine transferase.